The sequence spans 296 residues: MTTTLANRPDGEGSVQVKLDPKVNIEEGALVIAVYGKGGIGKSTTSSNLSAAFSKLGKKVLQIGCDPKHDSTFTLTHKMVPTVIDILEEVDFHSEELRPQDFMFEGFNGVQCVESGGPPAGTGCGGYVTGQTVKLLKEHHLLEDTDVVIFDVLGDVVCGGFAAPLQHANYCLIVTANDFDSIFAMNRIVAAINAKAKNYKVRLGGVIANRSAELDQIEKFNEKTGLKTMAHFRNVDAIRRSRLKKCTIFEMDPEEEGVLEVQNEYLSLAKKMIDNVEPLEAEPLKDREIFDLLGFD.

ATP is bound by residues 39–44 and lysine 68; that span reads GIGKST. Serine 43 contributes to the Mg(2+) binding site. [4Fe-4S] cluster contacts are provided by cysteine 124 and cysteine 158. Residue 209-210 participates in ATP binding; that stretch reads NR.

The protein belongs to the NifH/BchL/ChlL family. Homodimer. Protochlorophyllide reductase is composed of three subunits; ChlL, ChlN and ChlB. The cofactor is [4Fe-4S] cluster.

The catalysed reaction is chlorophyllide a + oxidized 2[4Fe-4S]-[ferredoxin] + 2 ADP + 2 phosphate = protochlorophyllide a + reduced 2[4Fe-4S]-[ferredoxin] + 2 ATP + 2 H2O. Its pathway is porphyrin-containing compound metabolism; chlorophyll biosynthesis (light-independent). In terms of biological role, component of the dark-operative protochlorophyllide reductase (DPOR) that uses Mg-ATP and reduced ferredoxin to reduce ring D of protochlorophyllide (Pchlide) to form chlorophyllide a (Chlide). This reaction is light-independent. The L component serves as a unique electron donor to the NB-component of the complex, and binds Mg-ATP. This Prochlorococcus marinus (strain SARG / CCMP1375 / SS120) protein is Light-independent protochlorophyllide reductase iron-sulfur ATP-binding protein.